The primary structure comprises 308 residues: D-alanine--D-alanine ligase (308 aa).

In terms of domain architecture, ATP-grasp spans 105-302; sequence KAIFRSLGLA…FPDLCERILD (198 aa). 133-188 is a binding site for ATP; that stretch reads DLPFGLPCVVKPAGEGSSVGVHLVNEAAELGPACRDAASHAGDVIVERYVKGTEVD. 3 residues coordinate Mg(2+): D256, E269, and N271.

The protein belongs to the D-alanine--D-alanine ligase family. It depends on Mg(2+) as a cofactor. Requires Mn(2+) as cofactor.

It is found in the cytoplasm. The enzyme catalyses 2 D-alanine + ATP = D-alanyl-D-alanine + ADP + phosphate + H(+). The protein operates within cell wall biogenesis; peptidoglycan biosynthesis. Functionally, cell wall formation. This chain is D-alanine--D-alanine ligase, found in Anaeromyxobacter sp. (strain K).